The chain runs to 391 residues: AN1-type zinc finger and UBX domain-containing protein DDB_G0268260 (391 aa).

Low complexity predominate over residues 1–16 (MQQQSPPTAPQQQQQQ). The interval 1–20 (MQQQSPPTAPQQQQQQQRER) is disordered. AN1-type zinc fingers lie at residues 26-74 (DHIG…QREN) and 118-166 (APKS…IINS). Cys32, Cys37, Cys47, Cys50, Cys55, His58, His64, Cys66, Cys124, Cys129, Cys139, Cys142, Cys147, His150, His156, and Cys158 together coordinate Zn(2+). A compositionally biased stretch (low complexity) spans 185-236 (NINNNINNNKNNNNNNNNNNNNNNNNNNNNNNNNNNNNNNNNNNNNNSNNNN). The interval 185–240 (NINNNINNNKNNNNNNNNNNNNNNNNNNNNNNNNNNNNNNNNNNNNNSNNNNKLIY) is disordered. A UBX domain is found at 278–356 (SSEEIGEIGI…GLLPVSTLYM (79 aa)).

This Dictyostelium discoideum (Social amoeba) protein is AN1-type zinc finger and UBX domain-containing protein DDB_G0268260.